A 435-amino-acid polypeptide reads, in one-letter code: Methylenetetrahydrofolate--tRNA-(uracil-5-)-methyltransferase TrmFO (435 aa).

9–14 (GGGLAG) contacts FAD.

The protein belongs to the MnmG family. TrmFO subfamily. Requires FAD as cofactor.

The protein localises to the cytoplasm. The enzyme catalyses uridine(54) in tRNA + (6R)-5,10-methylene-5,6,7,8-tetrahydrofolate + NADH + H(+) = 5-methyluridine(54) in tRNA + (6S)-5,6,7,8-tetrahydrofolate + NAD(+). The catalysed reaction is uridine(54) in tRNA + (6R)-5,10-methylene-5,6,7,8-tetrahydrofolate + NADPH + H(+) = 5-methyluridine(54) in tRNA + (6S)-5,6,7,8-tetrahydrofolate + NADP(+). Its function is as follows. Catalyzes the folate-dependent formation of 5-methyl-uridine at position 54 (M-5-U54) in all tRNAs. The polypeptide is Methylenetetrahydrofolate--tRNA-(uracil-5-)-methyltransferase TrmFO (Geobacter sp. (strain M21)).